Reading from the N-terminus, the 1680-residue chain is RAF-like serine/threonine-protein kinase PRAF (1680 aa).

The segment at 86-163 (FSPSDPHNSV…TPSDDGKDFP (78 aa)) is disordered. In terms of domain architecture, PB1 spans 166-267 (RVKFMCSFGG…SRLRVFLFPA (102 aa)). 7 disordered regions span residues 363–388 (LTGNLSNRSNAPSAPSSAPSSPPLLA), 417–516 (PQYT…DSQQ), 556–580 (PDMLQSSGAQPAVSGQQQQGYQPQQ), 594–613 (GANHEGAYRQGDQQQQSQQF), 641–672 (QSTSYHGSAPSSPRPGFRELPSRHLPGGPQLQ), 700–725 (RSFRLSSSPPRYRDHHPHSEERLHRQ), and 1186–1226 (LPNA…LGGQ). The segment covering 366-388 (NLSNRSNAPSAPSSAPSSPPLLA) has biased composition (low complexity). Over residues 446 to 482 (HEMHYRSTDSRRGPESPPKKFHDALHQDHPITVEQRR) the composition is skewed to basic and acidic residues. 2 stretches are compositionally biased toward low complexity: residues 560 to 580 (QSSGAQPAVSGQQQQGYQPQQ) and 603 to 613 (QGDQQQQSQQF). The segment covering 641 to 651 (QSTSYHGSAPS) has biased composition (polar residues). Over residues 1204–1217 (SRSSSSSLSELSKS) the composition is skewed to low complexity. The residue at position 1248 (S1248) is a Phosphoserine. A compositionally biased stretch (basic and acidic residues) spans 1339 to 1354 (ASTVDKENQEEVRTGL). Residues 1339 to 1372 (ASTVDKENQEEVRTGLDEPADEDKANSTGLGSDP) are disordered. The residue at position 1365 (S1365) is a Phosphoserine. The Protein kinase domain occupies 1389-1655 (LEELRELGSG…SDIAKELRTM (267 aa)). ATP-binding positions include 1395–1403 (LGSGTFGTV) and K1416. D1518 (proton acceptor) is an active-site residue. The interval 1661-1680 (PKTQAQTQGQSHPHPQMQIV) is disordered.

The protein belongs to the protein kinase superfamily. Ser/Thr protein kinase family. Post-translationally, hyperphosphorylated in response to auxin. Its phosphorylation state is also rapidly stimulated by photosynthetic activity (e.g. in response to blue light and red light irradiation); dephosphorylated in the darkness.

Its subcellular location is the cytoplasm. The catalysed reaction is L-seryl-[protein] + ATP = O-phospho-L-seryl-[protein] + ADP + H(+). The enzyme catalyses L-threonyl-[protein] + ATP = O-phospho-L-threonyl-[protein] + ADP + H(+). Its activity is regulated as follows. Activated by auxin via rapid phosphorylation. Regulated by photosynthesis-activity-dependent changes in its phosphorylation status. In terms of biological role, RAF-like protein kinase acting as a central mediator of a fast response pathway to auxin involving proteins phosphorylation, and leading to rapid cellular responses including membrane depolarization and cytoplasmic streaming. Required for general growth and developmental process. Photosynthesis signaling kinase involved in the regulation of the sucrose metabolism involving PGM1. Necessary for optimal chloroplast electron transport rate (ETR). The protein is RAF-like serine/threonine-protein kinase PRAF of Marchantia polymorpha (Common liverwort).